Consider the following 352-residue polypeptide: Cysteinyl leukotriene receptor 1 (352 aa).

Topologically, residues 1–43 (MYLQGTKQTFLENMNGTENLTTSLINNTCHDTIDEFRNQVYST) are extracellular. N-linked (GlcNAc...) asparagine glycosylation is found at Asn-15, Asn-19, and Asn-26. The helical transmembrane segment at 44 to 64 (MYSVISVVGFFGNSFVLYVLI) threads the bilayer. Topologically, residues 65 to 72 (KTYHEKSA) are cytoplasmic. Residues 73–93 (FQVYMINLAIADLLCVCTLPL) traverse the membrane as a helical segment. Residues 94–121 (RVVYYVHKGKWLFGDFLCRLTTYALYVN) are Extracellular-facing. Cys-111 and Cys-188 form a disulfide bridge. A helical membrane pass occupies residues 122–142 (LYCSIFFMTAMSFFRCVAIVF). The Cytoplasmic segment spans residues 143–156 (PVQNINLVTQKKAR). Residues 157–177 (FVCIGIWIFVILTSSPFLMYK) form a helical membrane-spanning segment. Residues 178–208 (SYQDEKNNTKCFEPPQNNQAKKYVLILHYVS) lie on the Extracellular side of the membrane. An N-linked (GlcNAc...) asparagine glycan is attached at Asn-184. A helical membrane pass occupies residues 209 to 229 (LFFGFIIPFVTIIVCYTMIIL). At 230–245 (TLLKNTMKKNMPSRRK) the chain is on the cytoplasmic side. Residues 246-266 (AIGMIIVVTAAFLVSFMPYHI) traverse the membrane as a helical segment. Residues 267–291 (QRTIHLHLLHSETRPCDSVLRMQKS) lie on the Extracellular side of the membrane. Residues 292 to 312 (VVITLSLAASNCCFDPLLYFF) form a helical membrane-spanning segment. Residues 313-352 (SGGNFRRRLSTFRKHSLSSMTYVPKKKASLPEKGEEICNE) lie on the Cytoplasmic side of the membrane.

The protein belongs to the G-protein coupled receptor 1 family. In terms of tissue distribution, widely expressed, with higher expression in the lung and skin, intermediate levels in the heart, kidney and stomach and lower levels in several other tissues. Isoform 1 is the most abundant form in all tested tissues.

The protein resides in the cell membrane. Receptor for cysteinyl leukotrienes mediating constriction of the microvascular smooth muscle during an inflammatory response. This response is mediated via a G-protein that activates a phosphatidylinositol-calcium second messenger system. The rank order of affinities for the leukotrienes is LTD4 &gt;&gt; LTE4 = LTC4 &gt;&gt; LTB4. The polypeptide is Cysteinyl leukotriene receptor 1 (Cysltr1) (Mus musculus (Mouse)).